Here is a 113-residue protein sequence, read N- to C-terminus: Large ribosomal subunit protein uL22 (113 aa).

This sequence belongs to the universal ribosomal protein uL22 family. As to quaternary structure, part of the 50S ribosomal subunit.

This protein binds specifically to 23S rRNA; its binding is stimulated by other ribosomal proteins, e.g. L4, L17, and L20. It is important during the early stages of 50S assembly. It makes multiple contacts with different domains of the 23S rRNA in the assembled 50S subunit and ribosome. In terms of biological role, the globular domain of the protein is located near the polypeptide exit tunnel on the outside of the subunit, while an extended beta-hairpin is found that lines the wall of the exit tunnel in the center of the 70S ribosome. The protein is Large ribosomal subunit protein uL22 of Geobacillus thermodenitrificans (strain NG80-2).